The sequence spans 265 residues: Imidazole glycerol phosphate synthase subunit HisF (265 aa).

Residues D17 and D136 contribute to the active site.

Belongs to the HisA/HisF family. Heterodimer of HisH and HisF.

It localises to the cytoplasm. It catalyses the reaction 5-[(5-phospho-1-deoxy-D-ribulos-1-ylimino)methylamino]-1-(5-phospho-beta-D-ribosyl)imidazole-4-carboxamide + L-glutamine = D-erythro-1-(imidazol-4-yl)glycerol 3-phosphate + 5-amino-1-(5-phospho-beta-D-ribosyl)imidazole-4-carboxamide + L-glutamate + H(+). It participates in amino-acid biosynthesis; L-histidine biosynthesis; L-histidine from 5-phospho-alpha-D-ribose 1-diphosphate: step 5/9. IGPS catalyzes the conversion of PRFAR and glutamine to IGP, AICAR and glutamate. The HisF subunit catalyzes the cyclization activity that produces IGP and AICAR from PRFAR using the ammonia provided by the HisH subunit. This chain is Imidazole glycerol phosphate synthase subunit HisF, found in Mycobacterium avium (strain 104).